Here is a 252-residue protein sequence, read N- to C-terminus: 2-succinyl-6-hydroxy-2,4-cyclohexadiene-1-carboxylate synthase (252 aa).

It belongs to the AB hydrolase superfamily. MenH family. In terms of assembly, monomer.

It catalyses the reaction 5-enolpyruvoyl-6-hydroxy-2-succinyl-cyclohex-3-ene-1-carboxylate = (1R,6R)-6-hydroxy-2-succinyl-cyclohexa-2,4-diene-1-carboxylate + pyruvate. It participates in quinol/quinone metabolism; 1,4-dihydroxy-2-naphthoate biosynthesis; 1,4-dihydroxy-2-naphthoate from chorismate: step 3/7. It functions in the pathway quinol/quinone metabolism; menaquinone biosynthesis. Its function is as follows. Catalyzes a proton abstraction reaction that results in 2,5-elimination of pyruvate from 2-succinyl-5-enolpyruvyl-6-hydroxy-3-cyclohexene-1-carboxylate (SEPHCHC) and the formation of 2-succinyl-6-hydroxy-2,4-cyclohexadiene-1-carboxylate (SHCHC). This is 2-succinyl-6-hydroxy-2,4-cyclohexadiene-1-carboxylate synthase from Escherichia coli O9:H4 (strain HS).